Reading from the N-terminus, the 472-residue chain is uncharacterized protein (472 aa).

A run of 6 helical transmembrane segments spans residues 4 to 24 (IIIL…FSVI), 27 to 47 (APIC…LPFF), 56 to 76 (AGFI…GKVV), 99 to 119 (ILAI…LFVV), 140 to 160 (LIPG…LPGT), and 176 to 196 (IYAA…AGML). The segment at 209-229 (GEGYGGFDSQNAPAPESIESA) is disordered. Residues 220–229 (APAPESIESA) show a composition bias toward low complexity. The next 5 membrane-spanning stretches (helical) occupy residues 240-260 (ALAF…TIYL), 286-306 (AAAI…TILF), 323-343 (IGGA…GGII), 372-392 (TALA…LSAM), and 448-468 (IFAI…IYSL).

This sequence belongs to the CitM (TC 2.A.11) transporter family.

Its subcellular location is the cell membrane. This is an uncharacterized protein from Bacillus subtilis (strain 168).